Reading from the N-terminus, the 59-residue chain is Large ribosomal subunit protein bL32 (59 aa).

The segment covering 1–22 (MAVPKKKTSNSKRDSRRAHWNR) has biased composition (basic residues). The segment at 1 to 59 (MAVPKKKTSNSKRDSRRAHWNRKANLAAQRALSTGKSILTGRAKGFEYPTKDDDEDDDE) is disordered.

This sequence belongs to the bacterial ribosomal protein bL32 family.

This chain is Large ribosomal subunit protein bL32, found in Acaryochloris marina (strain MBIC 11017).